The chain runs to 184 residues: Large ribosomal subunit protein uL6 (184 aa).

This sequence belongs to the universal ribosomal protein uL6 family. As to quaternary structure, part of the 50S ribosomal subunit.

This protein binds to the 23S rRNA, and is important in its secondary structure. It is located near the subunit interface in the base of the L7/L12 stalk, and near the tRNA binding site of the peptidyltransferase center. This chain is Large ribosomal subunit protein uL6, found in Onion yellows phytoplasma (strain OY-M).